Consider the following 208-residue polypeptide: LysM and putative peptidoglycan-binding domain-containing protein 2 (208 aa).

The disordered stretch occupies residues 1 to 54; the sequence is MAEFSPVLPPLRDDGGGGRYGQPLFPRSRSGSESDSELSQSLARTKTRSYGSTA. Positions 27 to 42 are enriched in low complexity; the sequence is RSRSGSESDSELSQSL. Residues 65 to 109 enclose the LysM domain; sequence IEHRVTDGETLQGIALKYGVTMEQIKRVNKLFSNDCIFLRNTLSI. 2 disordered regions span residues 122–169 and 187–208; these read LSLE…EELS and AARK…YQEI. Residues 129–140 show a composition bias toward polar residues; that stretch reads SEGNTPQESPCV. Positions 147 to 156 are enriched in pro residues; that stretch reads PSPPPEPSVP.

The protein is LysM and putative peptidoglycan-binding domain-containing protein 2 (lysmd2) of Danio rerio (Zebrafish).